Consider the following 497-residue polypeptide: tRNA (adenine(58)-N(1))-methyltransferase non-catalytic subunit TRM6 (497 aa).

2 disordered regions span residues 1–20 (MEGSGEQPGPQPQHPGDHRI) and 69–100 (TSGGSLQPKKKREEPTAETKEAGTDNRNIVDD). The span at 79 to 100 (KREEPTAETKEAGTDNRNIVDD) shows a compositional bias: basic and acidic residues. 94–104 (NRNIVDDGKSQ) contacts substrate. Threonine 107 is modified (phosphothreonine). Substrate contacts are provided by residues 145–154 (KYIKKKKKKY) and 175–182 (REPGKINH). Positions 276–354 (SSEPKDSALV…EKQRRQEEQR (79 aa)) are disordered. A phosphoserine mark is found at serine 298 and serine 305. Residues 327–354 (DPEHKGPKERGSKKDYIQEKQRRQEEQR) show a composition bias toward basic and acidic residues. Substrate-binding positions include arginine 349, arginine 377, 415-423 (RERGGVINL), and 434-441 (QVLPDRSH). The segment at 472-497 (SNASTLESHETEEPAAKKRKCPESDS) is disordered. Positions 478–497 (ESHETEEPAAKKRKCPESDS) are enriched in basic and acidic residues.

It belongs to the TRM6/GCD10 family. As to quaternary structure, heterotetramer; composed of two copies of TRMT6 and two copies of TRMT61A. In terms of tissue distribution, expressed in brain, liver, testis and ovary.

It is found in the nucleus. In terms of biological role, substrate-binding subunit of tRNA (adenine-N(1)-)-methyltransferase, which catalyzes the formation of N(1)-methyladenine at position 58 (m1A58) in initiator methionyl-tRNA. Together with the TRMT61A catalytic subunit, part of a mRNA N(1)-methyltransferase complex that mediates methylation of adenosine residues at the N(1) position of a small subset of mRNAs: N(1) methylation takes place in tRNA T-loop-like structures of mRNAs and is only present at low stoichiometries. In Homo sapiens (Human), this protein is tRNA (adenine(58)-N(1))-methyltransferase non-catalytic subunit TRM6 (TRMT6).